A 191-amino-acid polypeptide reads, in one-letter code: Peptide methionine sulfoxide reductase (191 aa).

Disordered regions lie at residues 1–20 (MASSTTNNPALDLDSDTPEN) and 168–191 (EKGGGNGNKQSAQKGCNDPIKCYG).

This sequence belongs to the MsrA Met sulfoxide reductase family.

It catalyses the reaction L-methionyl-[protein] + [thioredoxin]-disulfide + H2O = L-methionyl-(S)-S-oxide-[protein] + [thioredoxin]-dithiol. The enzyme catalyses [thioredoxin]-disulfide + L-methionine + H2O = L-methionine (S)-S-oxide + [thioredoxin]-dithiol. Its function is as follows. Has an important function as a repair enzyme for proteins that have been inactivated by oxidation. Catalyzes the reversible oxidation-reduction of methionine sulfoxide in proteins to methionine. This Fragaria ananassa (Strawberry) protein is Peptide methionine sulfoxide reductase.